Here is a 347-residue protein sequence, read N- to C-terminus: Merozoite surface protein P12 (347 aa).

Positions 1-23 form a signal peptide, or 25; the sequence is MIKLSKKYCLGISFVLYILLSVC. 6-Cys domains lie at 27-172 and 175-305; these read KNLT…IPSL and KVKG…ISSS. Asn-28 carries an N-linked (GlcNAc...) asparagine glycan. 3 cysteine pairs are disulfide-bonded: Cys-31–Cys-53, Cys-67–Cys-138, and Cys-81–Cys-136. 6 N-linked (GlcNAc...) asparagine glycosylation sites follow: Asn-147, Asn-200, Asn-228, Asn-242, Asn-265, and Asn-322. Cystine bridges form between Cys-179/Cys-211, Cys-225/Cys-286, and Cys-236/Cys-284. Asn-322 carries the GPI-anchor amidated asparagine lipid modification. Residues 323 to 347 constitute a propeptide, removed in mature form; that stretch reads SSFLTLSSYCAFITFIITSFLSFIL.

In terms of assembly, heterodimer; heterodimerizes with PF41. May form an antiparallel heterodimer with PF41.

Its subcellular location is the cell surface. The protein localises to the cell membrane. This chain is Merozoite surface protein P12 (PF12), found in Plasmodium falciparum.